A 244-amino-acid chain; its full sequence is 3-deoxy-manno-octulosonate cytidylyltransferase (244 aa).

It belongs to the KdsB family.

The protein resides in the cytoplasm. The catalysed reaction is 3-deoxy-alpha-D-manno-oct-2-ulosonate + CTP = CMP-3-deoxy-beta-D-manno-octulosonate + diphosphate. Its pathway is nucleotide-sugar biosynthesis; CMP-3-deoxy-D-manno-octulosonate biosynthesis; CMP-3-deoxy-D-manno-octulosonate from 3-deoxy-D-manno-octulosonate and CTP: step 1/1. The protein operates within bacterial outer membrane biogenesis; lipopolysaccharide biosynthesis. In terms of biological role, activates KDO (a required 8-carbon sugar) for incorporation into bacterial lipopolysaccharide in Gram-negative bacteria. This Rickettsia bellii (strain OSU 85-389) protein is 3-deoxy-manno-octulosonate cytidylyltransferase.